The following is a 359-amino-acid chain: MTIYNFSAGPAVLPKDVLQQVQAELVDWHGSGMSVMEMSHRGKEFMGIAAEAEADLRELMAIPANYKVLFLQGGASSQFAMVPMNLLRGKASADYLNTGEWSKKAIKEAKKYAAVNVVASSEDRNFSYAPTQDRWKLDPNAAYVHYTPNETIGGVEIFWTPEAGDVPIAADMSSTILSRPIDVSKYGVIYAGAQKNIGPAGLTIVIVREDLMGETVAGTPTMFDYKIHADNESMYNTPATFAMYTAGLVFKWLKARGGLAGMEKINREKAALLYEALDATDFYASPVAKDNRSLMNVPFTLKDAALDEAFLKGAKERGLLQLKGHRSVGGMRASIYNAMPTEGVKALVDYLHAFEKNHG.

R41 serves as a coordination point for L-glutamate. Residues 75-76, W101, T151, D171, and Q194 each bind pyridoxal 5'-phosphate; that span reads AS. Position 195 is an N6-(pyridoxal phosphate)lysine (K195). 236 to 237 is a binding site for pyridoxal 5'-phosphate; sequence NT.

This sequence belongs to the class-V pyridoxal-phosphate-dependent aminotransferase family. SerC subfamily. As to quaternary structure, homodimer. Pyridoxal 5'-phosphate serves as cofactor.

It is found in the cytoplasm. The enzyme catalyses O-phospho-L-serine + 2-oxoglutarate = 3-phosphooxypyruvate + L-glutamate. The catalysed reaction is 4-(phosphooxy)-L-threonine + 2-oxoglutarate = (R)-3-hydroxy-2-oxo-4-phosphooxybutanoate + L-glutamate. The protein operates within amino-acid biosynthesis; L-serine biosynthesis; L-serine from 3-phospho-D-glycerate: step 2/3. It participates in cofactor biosynthesis; pyridoxine 5'-phosphate biosynthesis; pyridoxine 5'-phosphate from D-erythrose 4-phosphate: step 3/5. Functionally, catalyzes the reversible conversion of 3-phosphohydroxypyruvate to phosphoserine and of 3-hydroxy-2-oxo-4-phosphonooxybutanoate to phosphohydroxythreonine. This Thiobacillus denitrificans (strain ATCC 25259 / T1) protein is Phosphoserine aminotransferase.